The primary structure comprises 287 residues: Probable ribosomal RNA small subunit methyltransferase A (287 aa).

S-adenosyl-L-methionine is bound by residues H29, L31, G56, E77, D102, and N117.

Belongs to the class I-like SAM-binding methyltransferase superfamily. rRNA adenine N(6)-methyltransferase family. RsmA subfamily.

It localises to the cytoplasm. Specifically dimethylates two adjacent adenosines in the loop of a conserved hairpin near the 3'-end of 16S rRNA in the 30S particle. May play a critical role in biogenesis of 30S subunits. The polypeptide is Probable ribosomal RNA small subunit methyltransferase A (Methanosarcina barkeri (strain Fusaro / DSM 804)).